The chain runs to 256 residues: Alcohol dehydrogenase (256 aa).

An NAD(+)-binding site is contributed by Phe-12–Leu-35. Ser-140 contacts substrate. Tyr-153 functions as the Proton acceptor in the catalytic mechanism.

It belongs to the short-chain dehydrogenases/reductases (SDR) family. In terms of assembly, homodimer.

The catalysed reaction is a primary alcohol + NAD(+) = an aldehyde + NADH + H(+). The enzyme catalyses a secondary alcohol + NAD(+) = a ketone + NADH + H(+). The sequence is that of Alcohol dehydrogenase (Adh) from Drosophila erecta (Fruit fly).